Consider the following 133-residue polypeptide: MAETFRLKIIAPTGVFFDDDIERVVIRGIEGELAILAEHTPLTTNVAIGTFNIIFADKKKKNGTLLGGIATINPRETIILTDAAEWPEEIDIKRAQEAKERALKRIHDDKFDTARARAALERAIARINSKENV.

It belongs to the ATPase epsilon chain family. F-type ATPases have 2 components, CF(1) - the catalytic core - and CF(0) - the membrane proton channel. CF(1) has five subunits: alpha(3), beta(3), gamma(1), delta(1), epsilon(1). CF(0) has three main subunits: a, b and c.

It localises to the cell membrane. Inhibited by nitrate. In terms of biological role, produces ATP from ADP in the presence of a sodium gradient across the membrane. The protein is ATP synthase epsilon chain, sodium ion specific (atpC) of Acetobacterium woodii (strain ATCC 29683 / DSM 1030 / JCM 2381 / KCTC 1655 / WB1).